Reading from the N-terminus, the 373-residue chain is 4-hydroxy-3-methylbut-2-en-1-yl diphosphate synthase (flavodoxin) (373 aa).

Residues cysteine 270, cysteine 273, cysteine 305, and glutamate 312 each coordinate [4Fe-4S] cluster.

The protein belongs to the IspG family. The cofactor is [4Fe-4S] cluster.

It catalyses the reaction (2E)-4-hydroxy-3-methylbut-2-enyl diphosphate + oxidized [flavodoxin] + H2O + 2 H(+) = 2-C-methyl-D-erythritol 2,4-cyclic diphosphate + reduced [flavodoxin]. It participates in isoprenoid biosynthesis; isopentenyl diphosphate biosynthesis via DXP pathway; isopentenyl diphosphate from 1-deoxy-D-xylulose 5-phosphate: step 5/6. Converts 2C-methyl-D-erythritol 2,4-cyclodiphosphate (ME-2,4cPP) into 1-hydroxy-2-methyl-2-(E)-butenyl 4-diphosphate. The sequence is that of 4-hydroxy-3-methylbut-2-en-1-yl diphosphate synthase (flavodoxin) from Vibrio atlanticus (strain LGP32) (Vibrio splendidus (strain Mel32)).